We begin with the raw amino-acid sequence, 111 residues long: Universal stress protein B (111 aa).

2 consecutive transmembrane segments (helical) span residues 1 to 21 and 90 to 110; these read MIST…NMAR and FLLT…LMIW.

It belongs to the universal stress protein B family.

Its subcellular location is the cell inner membrane. This is Universal stress protein B from Salmonella arizonae (strain ATCC BAA-731 / CDC346-86 / RSK2980).